The chain runs to 432 residues: 3-phosphoshikimate 1-carboxyvinyltransferase (432 aa).

Lysine 23, serine 24, and arginine 28 together coordinate 3-phosphoshikimate. Lysine 23 lines the phosphoenolpyruvate pocket. The phosphoenolpyruvate site is built by glycine 95 and arginine 123. Positions 167, 169, 316, and 343 each coordinate 3-phosphoshikimate. Position 169 (glutamine 169) interacts with phosphoenolpyruvate. The Proton acceptor role is filled by aspartate 316. Residues arginine 347 and arginine 391 each contribute to the phosphoenolpyruvate site.

The protein belongs to the EPSP synthase family. In terms of assembly, monomer.

The protein localises to the cytoplasm. The catalysed reaction is 3-phosphoshikimate + phosphoenolpyruvate = 5-O-(1-carboxyvinyl)-3-phosphoshikimate + phosphate. The protein operates within metabolic intermediate biosynthesis; chorismate biosynthesis; chorismate from D-erythrose 4-phosphate and phosphoenolpyruvate: step 6/7. In terms of biological role, catalyzes the transfer of the enolpyruvyl moiety of phosphoenolpyruvate (PEP) to the 5-hydroxyl of shikimate-3-phosphate (S3P) to produce enolpyruvyl shikimate-3-phosphate and inorganic phosphate. The protein is 3-phosphoshikimate 1-carboxyvinyltransferase of Limosilactobacillus fermentum (strain NBRC 3956 / LMG 18251) (Lactobacillus fermentum).